We begin with the raw amino-acid sequence, 680 residues long: Methionine--tRNA ligase (680 aa).

The short motif at 15–25 (PYANGSIHLGH) is the 'HIGH' region element. Cys-146, Cys-149, Cys-159, and Cys-162 together coordinate Zn(2+). The 'KMSKS' region motif lies at 332 to 336 (KMSKS). Lys-335 contacts ATP. Residues 579-680 (DFAKVDMRIA…EGAQPGMRVM (102 aa)) form the tRNA-binding domain.

Belongs to the class-I aminoacyl-tRNA synthetase family. MetG type 1 subfamily. As to quaternary structure, homodimer. It depends on Zn(2+) as a cofactor.

Its subcellular location is the cytoplasm. It carries out the reaction tRNA(Met) + L-methionine + ATP = L-methionyl-tRNA(Met) + AMP + diphosphate. In terms of biological role, is required not only for elongation of protein synthesis but also for the initiation of all mRNA translation through initiator tRNA(fMet) aminoacylation. This Photobacterium profundum (strain SS9) protein is Methionine--tRNA ligase.